Consider the following 316-residue polypeptide: Transaldolase A (316 aa).

Lysine 131 (schiff-base intermediate with substrate) is an active-site residue.

The protein belongs to the transaldolase family. Type 1 subfamily. As to quaternary structure, homodimer.

It localises to the cytoplasm. The enzyme catalyses D-sedoheptulose 7-phosphate + D-glyceraldehyde 3-phosphate = D-erythrose 4-phosphate + beta-D-fructose 6-phosphate. It functions in the pathway carbohydrate degradation; pentose phosphate pathway; D-glyceraldehyde 3-phosphate and beta-D-fructose 6-phosphate from D-ribose 5-phosphate and D-xylulose 5-phosphate (non-oxidative stage): step 2/3. Functionally, transaldolase is important for the balance of metabolites in the pentose-phosphate pathway. The chain is Transaldolase A (talA) from Escherichia coli O157:H7.